A 354-amino-acid chain; its full sequence is Guanine nucleotide-binding protein G(o) subunit alpha (354 aa).

Glycine 2 carries the N-myristoyl glycine lipid modification. Cysteine 3 carries the S-palmitoyl cysteine lipid modification. Positions 32–354 (KDVKLLLLGA…ANNLRGCGLY (323 aa)) constitute a G-alpha domain. The G1 motif stretch occupies residues 35–48 (KLLLLGAGESGKST). GTP-binding residues include glutamate 43, lysine 46, serine 47, threonine 48, serine 152, leucine 176, arginine 177, threonine 178, and arginine 179. Residue serine 47 coordinates Mg(2+). The tract at residues 174 to 182 (DILRTRVKT) is G2 motif. Threonine 182 is a Mg(2+) binding site. The tract at residues 197–206 (FRLFDVGGQR) is G3 motif. Glutamine 205 carries the post-translational modification 5-glutamyl histamine. The G4 motif stretch occupies residues 266-273 (ILFLNKKD). Positions 270, 273, and 325 each coordinate GTP. Positions 324–329 (TCATDT) are G5 motif. At asparagine 346 the chain carries Deamidated asparagine; in form Alpha-3. Cysteine 351 is lipidated: S-palmitoyl cysteine.

It belongs to the G-alpha family. G(i/o/t/z) subfamily. In terms of assembly, g proteins are composed of 3 units; alpha, beta and gamma. The alpha chain contains the guanine nucleotide binding site. Forms a complex with GNB1 and GNG3. Interacts with RGS14. Interacts with RGS16. Interacts with RGS19. Interacts (when palmitoylated) with ADGRG3. Deamidation of Asn-346 converts alpha-1 to alpha-3. Post-translationally, histaminylated at Gln-205 residues by TGM2.

It localises to the cell membrane. The protein localises to the membrane. It catalyses the reaction GTP + H2O = GDP + phosphate + H(+). With respect to regulation, the GTPase activity is promoted by GTPAse activators, such as RGS14, RGS16 and RGS19. Functionally, guanine nucleotide-binding proteins (G proteins) function as transducers downstream of G protein-coupled receptors (GPCRs) in numerous signaling cascades. The alpha chain contains the guanine nucleotide binding site and alternates between an active, GTP-bound state and an inactive, GDP-bound state. Signaling by an activated GPCR promotes GDP release and GTP binding. The alpha subunit has a low GTPase activity that converts bound GTP to GDP, thereby terminating the signal. Both GDP release and GTP hydrolysis are modulated by numerous regulatory proteins. Signaling is mediated via effector proteins, such as adenylate cyclase. Inhibits adenylate cyclase activity, leading to decreased intracellular cAMP levels. This Cricetulus longicaudatus (Long-tailed dwarf hamster) protein is Guanine nucleotide-binding protein G(o) subunit alpha (GNAO1).